The chain runs to 458 residues: Delta(8)-fatty-acid desaturase (458 aa).

In terms of domain architecture, Cytochrome b5 heme-binding spans 16–100; sequence KKYITSKELK…LKDYQVSDIS (85 aa). The heme site is built by His51 and His74. A run of 2 helical transmembrane segments spans residues 122-142 and 147-167; these read GVIYSLCFVSLLLSACVYGVL and FWIHMLSGAILGLAWMQIAYL. The Histidine box-1 motif lies at 169-173; that stretch reads HDAGH. The helical transmembrane segment at 185–205 threads the bilayer; it reads FAGIFIGNCITGISIAWWKWT. A Histidine box-2 motif is present at residues 206-210; the sequence is HNAHH. A run of 3 helical transmembrane segments spans residues 264–284, 293–313, and 320–340; these read YYPIMCVARVNLYLQTILLLI, GLNILGTLIFWTWFPLLVSRL, and VAFVLVSFCVTGIQHIQFTLN. The Histidine box-3 signature appears at 383–387; sequence QLEHH.

It belongs to the fatty acid desaturase type 1 family. It depends on Fe cation as a cofactor.

It localises to the membrane. It catalyses the reaction an N-acyl-(4R)-4-hydroxysphinganine + 2 Fe(II)-[cytochrome b5] + O2 + 2 H(+) = a (4R,8E)-4-hydroxysphingenine ceramide + 2 Fe(III)-[cytochrome b5] + 2 H2O. The catalysed reaction is an N-acyl-(4R)-4-hydroxysphinganine + 2 Fe(II)-[cytochrome b5] + O2 + 2 H(+) = a (4R,8Z)-4-hydroxysphing-8-enine ceramide + 2 Fe(III)-[cytochrome b5] + 2 H2O. Functionally, plays a major role as delta(8)-fatty-acid desaturase which introduces a double bond at the 8-position in the long-chain base (LCB) of ceramides with or without a hydroxy group at the 4-position. The enzyme produces both the 8E and 8Z isomers. This structural modification contributes to the quantitative partitioning of ceramides between the two major sphingolipid classes, glucosylceramides and glycosylinositolphosphoryl ceramides. Sphingolipids are important membrane components involved in environmental stress responses, such as resistance to chilling, and act as cell signaling molecules. This is Delta(8)-fatty-acid desaturase (sld1) from Helianthus annuus (Common sunflower).